The following is a 315-amino-acid chain: Adenine deaminase (315 aa).

Residues H14, H16, and H194 each coordinate Zn(2+). Residue E197 is the Proton donor of the active site. D275 is a Zn(2+) binding site. Residue D276 participates in substrate binding.

It belongs to the metallo-dependent hydrolases superfamily. Adenosine and AMP deaminases family. Adenine deaminase type 2 subfamily. The cofactor is Zn(2+).

The enzyme catalyses adenine + H2O + H(+) = hypoxanthine + NH4(+). Its function is as follows. Catalyzes the hydrolytic deamination of adenine to hypoxanthine. Plays an important role in the purine salvage pathway and in nitrogen catabolism. This Pseudomonas putida (strain ATCC 47054 / DSM 6125 / CFBP 8728 / NCIMB 11950 / KT2440) protein is Adenine deaminase.